The sequence spans 225 residues: Ribulose-phosphate 3-epimerase (225 aa).

Ser-9 is a binding site for substrate. His-34, Asp-36, and His-68 together coordinate a divalent metal cation. Asp-36 serves as the catalytic Proton acceptor. Substrate-binding positions include His-68, 144 to 147 (GFGG), 177 to 179 (DGG), and 199 to 200 (GS). Asp-177 lines the a divalent metal cation pocket. Catalysis depends on Asp-177, which acts as the Proton donor.

The protein belongs to the ribulose-phosphate 3-epimerase family. A divalent metal cation serves as cofactor.

The catalysed reaction is D-ribulose 5-phosphate = D-xylulose 5-phosphate. The protein operates within carbohydrate degradation. Its function is as follows. Catalyzes the reversible epimerization of D-ribulose 5-phosphate to D-xylulose 5-phosphate. The chain is Ribulose-phosphate 3-epimerase from Escherichia coli O157:H7.